We begin with the raw amino-acid sequence, 493 residues long: 3-octaprenyl-4-hydroxybenzoate carboxy-lyase (493 aa).

Mn(2+) is bound at residue Asn172. Prenylated FMN is bound by residues 175-177, 189-191, and 194-195; these read IYR, RWL, and RG. Glu238 is a Mn(2+) binding site. The active-site Proton donor is the Asp287.

This sequence belongs to the UbiD family. As to quaternary structure, homohexamer. Prenylated FMN is required as a cofactor. It depends on Mn(2+) as a cofactor.

It localises to the cell membrane. The enzyme catalyses a 4-hydroxy-3-(all-trans-polyprenyl)benzoate + H(+) = a 2-(all-trans-polyprenyl)phenol + CO2. Its pathway is cofactor biosynthesis; ubiquinone biosynthesis. Catalyzes the decarboxylation of 3-octaprenyl-4-hydroxy benzoate to 2-octaprenylphenol, an intermediate step in ubiquinone biosynthesis. In Shewanella sediminis (strain HAW-EB3), this protein is 3-octaprenyl-4-hydroxybenzoate carboxy-lyase.